A 176-amino-acid chain; its full sequence is Isopentenyl-diphosphate Delta-isomerase (176 aa).

Positions 24 and 30 each coordinate Mn(2+). The Nudix hydrolase domain occupies 28 to 160 (LLHRAFSIFV…PSAFTVWFHC (133 aa)). The active site involves Cys65. A Mn(2+)-binding site is contributed by His67. Glu85 contacts Mg(2+). Residues Glu110 and Glu112 each coordinate Mn(2+). Glu112 is a catalytic residue.

It belongs to the IPP isomerase type 1 family. Requires Mg(2+) as cofactor. Mn(2+) is required as a cofactor.

It is found in the cytoplasm. It carries out the reaction isopentenyl diphosphate = dimethylallyl diphosphate. Its pathway is isoprenoid biosynthesis; dimethylallyl diphosphate biosynthesis; dimethylallyl diphosphate from isopentenyl diphosphate: step 1/1. In terms of biological role, catalyzes the 1,3-allylic rearrangement of the homoallylic substrate isopentenyl (IPP) to its highly electrophilic allylic isomer, dimethylallyl diphosphate (DMAPP). This Burkholderia multivorans (strain ATCC 17616 / 249) protein is Isopentenyl-diphosphate Delta-isomerase.